The chain runs to 142 residues: Heat shock protein HSP.16.4 (142 aa).

Residues 27–142 (NLFNDLKSNL…KEIKTSIPIE (116 aa)) enclose the sHSP domain.

This sequence belongs to the small heat shock protein (HSP20) family.

Its subcellular location is the cytoplasm. This is Heat shock protein HSP.16.4 from Streptococcus thermophilus.